We begin with the raw amino-acid sequence, 102 residues long: Small ribosomal subunit protein uS10 (102 aa).

This sequence belongs to the universal ribosomal protein uS10 family. Part of the 30S ribosomal subunit.

Its function is as follows. Involved in the binding of tRNA to the ribosomes. In Heliobacterium modesticaldum (strain ATCC 51547 / Ice1), this protein is Small ribosomal subunit protein uS10.